The following is a 409-amino-acid chain: S-adenosylmethionine synthase (409 aa).

ATP is bound at residue His15. Asp17 provides a ligand contact to Mg(2+). Glu43 is a K(+) binding site. Residues Glu56 and Gln100 each contribute to the L-methionine site. The segment at 100-110 (QSSDIAQGVNE) is flexible loop. ATP is bound by residues 171 to 173 (DGK), 248 to 249 (KF), Asp257, 263 to 264 (RK), Ala280, and Lys284. An L-methionine-binding site is contributed by Asp257. An L-methionine-binding site is contributed by Lys288.

Belongs to the AdoMet synthase family. In terms of assembly, homotetramer; dimer of dimers. Requires Mg(2+) as cofactor. The cofactor is K(+).

Its subcellular location is the cytoplasm. It catalyses the reaction L-methionine + ATP + H2O = S-adenosyl-L-methionine + phosphate + diphosphate. It participates in amino-acid biosynthesis; S-adenosyl-L-methionine biosynthesis; S-adenosyl-L-methionine from L-methionine: step 1/1. Catalyzes the formation of S-adenosylmethionine (AdoMet) from methionine and ATP. The overall synthetic reaction is composed of two sequential steps, AdoMet formation and the subsequent tripolyphosphate hydrolysis which occurs prior to release of AdoMet from the enzyme. In Prochlorococcus marinus (strain NATL2A), this protein is S-adenosylmethionine synthase.